We begin with the raw amino-acid sequence, 331 residues long: uncharacterized protein (331 aa).

WD repeat units follow at residues 53-92 (KAHTNITGIISCDQLNGVITCGSEGEIHLWDIRSQAKSAV), 97-139 (QQST…KLIR), 144-184 (AHND…DSTD), and 300-331 (ASEEICRAISFDVKNDVYYSGGEDGLLQAFRV).

Its subcellular location is the cytoplasm. The protein resides in the nucleus. This is an uncharacterized protein from Schizosaccharomyces pombe (strain 972 / ATCC 24843) (Fission yeast).